Consider the following 351-residue polypeptide: tRNA N6-adenosine threonylcarbamoyltransferase (351 aa).

2 residues coordinate Fe cation: H111 and H115. Residues 134 to 138 (LVSGG), D167, G180, and N276 each bind substrate. D304 lines the Fe cation pocket.

The protein belongs to the KAE1 / TsaD family. Requires Fe(2+) as cofactor.

The protein localises to the cytoplasm. The catalysed reaction is L-threonylcarbamoyladenylate + adenosine(37) in tRNA = N(6)-L-threonylcarbamoyladenosine(37) in tRNA + AMP + H(+). In terms of biological role, required for the formation of a threonylcarbamoyl group on adenosine at position 37 (t(6)A37) in tRNAs that read codons beginning with adenine. Is involved in the transfer of the threonylcarbamoyl moiety of threonylcarbamoyl-AMP (TC-AMP) to the N6 group of A37, together with TsaE and TsaB. TsaD likely plays a direct catalytic role in this reaction. This chain is tRNA N6-adenosine threonylcarbamoyltransferase, found in Marinobacter nauticus (strain ATCC 700491 / DSM 11845 / VT8) (Marinobacter aquaeolei).